The sequence spans 327 residues: Cobalamin biosynthesis protein CobD (327 aa).

A run of 4 helical transmembrane segments spans residues 61–78 (MWLT…GLVI), 80–102 (SILP…ILLA), 160–182 (GIVA…YKFI), and 300–322 (AALV…ASLV).

It belongs to the CobD/CbiB family.

The protein resides in the cell membrane. It participates in cofactor biosynthesis; adenosylcobalamin biosynthesis. Converts cobyric acid to cobinamide by the addition of aminopropanol on the F carboxylic group. This chain is Cobalamin biosynthesis protein CobD, found in Brucella melitensis biotype 1 (strain ATCC 23456 / CCUG 17765 / NCTC 10094 / 16M).